Consider the following 49-residue polypeptide: MRQKVTLACVQCASRNYTAAKQIRRLGERLMANKFCSTCNKHTIHRETK.

Belongs to the bacterial ribosomal protein bL33 family.

This Geobacillus kaustophilus (strain HTA426) protein is Large ribosomal subunit protein bL33A.